Consider the following 100-residue polypeptide: Urease subunit gamma (100 aa).

Belongs to the urease gamma subunit family. Heterotrimer of UreA (gamma), UreB (beta) and UreC (alpha) subunits. Three heterotrimers associate to form the active enzyme.

Its subcellular location is the cytoplasm. It carries out the reaction urea + 2 H2O + H(+) = hydrogencarbonate + 2 NH4(+). The protein operates within nitrogen metabolism; urea degradation; CO(2) and NH(3) from urea (urease route): step 1/1. The polypeptide is Urease subunit gamma (Pseudomonas fluorescens (strain ATCC BAA-477 / NRRL B-23932 / Pf-5)).